A 317-amino-acid chain; its full sequence is Transaldolase (317 aa).

The Schiff-base intermediate with substrate role is filled by lysine 126.

Belongs to the transaldolase family. Type 1 subfamily. As to quaternary structure, homodimer.

The protein localises to the cytoplasm. The catalysed reaction is D-sedoheptulose 7-phosphate + D-glyceraldehyde 3-phosphate = D-erythrose 4-phosphate + beta-D-fructose 6-phosphate. The protein operates within carbohydrate degradation; pentose phosphate pathway; D-glyceraldehyde 3-phosphate and beta-D-fructose 6-phosphate from D-ribose 5-phosphate and D-xylulose 5-phosphate (non-oxidative stage): step 2/3. Functionally, transaldolase is important for the balance of metabolites in the pentose-phosphate pathway. The polypeptide is Transaldolase (Burkholderia pseudomallei (strain K96243)).